The sequence spans 326 residues: DnaJ homolog subfamily B member 6 (326 aa).

The 68-residue stretch at 2-69 folds into the J domain; sequence VDYYEVLGVQ…KKRDIYDKYG (68 aa). Residues 2 to 146 are interaction with HSP70; the sequence is VDYYEVLGVQ…TGSFFSAFSG (145 aa). Residues 119–242 are interaction with KRT18; the sequence is FEDFFGNRRG…ADDDALAEER (124 aa). R135 carries the omega-N-methylarginine modification. Positions 249–326 are disordered; that stretch reads ALPAQPAGLR…KKKKSTKGNH (78 aa). A Phosphoserine modification is found at S277.

In terms of assembly, homooligomer. Interacts with BAG3, HSPB8 and STUB1. Interacts with ALKBH1. Interacts with HSP70, KRT18 and PTTG. As to quaternary structure, interacts with histone deacetylases HDAC4, HDAC6, and SIRT2, HDAC activity is required for antiaggregation. Widely expressed. Highest levels in testis and brain, and lower levels in heart, spleen, intestine, ovary, placenta, lung, kidney, pancreas, thymus, prostate, skeletal muscle, liver and leukocytes. In testis, expressed in germ cells in the earlier stages of differentiation pathway as well as in spermatids. In brain, expressed at a higher level in hippocampus and thalamus and a lower level in amygdala, substantia nigra, corpus callosum and caudate nucleus.

It localises to the cytoplasm. The protein resides in the perinuclear region. The protein localises to the nucleus. Its subcellular location is the myofibril. It is found in the sarcomere. It localises to the z line. Has a stimulatory effect on the ATPase activity of HSP70 in a dose-dependent and time-dependent manner and hence acts as a co-chaperone of HSP70. Plays an indispensable role in the organization of KRT8/KRT18 filaments. Acts as an endogenous molecular chaperone for neuronal proteins including huntingtin. Suppresses aggregation and toxicity of polyglutamine-containing, aggregation-prone proteins. Also reduces cellular toxicity and caspase-3 activity. In terms of biological role, isoform B but not isoform A inhibits huntingtin aggregation. In Homo sapiens (Human), this protein is DnaJ homolog subfamily B member 6 (DNAJB6).